We begin with the raw amino-acid sequence, 122 residues long: Large ribosomal subunit protein uL18 (122 aa).

This sequence belongs to the universal ribosomal protein uL18 family. Part of the 50S ribosomal subunit; part of the 5S rRNA/L5/L18/L25 subcomplex. Contacts the 5S and 23S rRNAs.

This is one of the proteins that bind and probably mediate the attachment of the 5S RNA into the large ribosomal subunit, where it forms part of the central protuberance. The sequence is that of Large ribosomal subunit protein uL18 from Mycobacterium leprae (strain TN).